Reading from the N-terminus, the 503-residue chain is Probable dolichyl pyrophosphate Man9GlcNAc2 alpha-1,3-glucosyltransferase (503 aa).

At 1-46 the chain is on the cytoplasmic side; the sequence is MKERIKDKAWRPQFIKLNNPDTSKKIVSQKSKKPEIVDLSSPGNND. A helical transmembrane segment spans residues 47 to 67; the sequence is LVTISILCVLLCFQLAISLNP. Residues 68–151 lie on the Lumenal side of the membrane; that stretch reads HSGESQPPMY…SRGYESIAHK (84 aa). Residues 152 to 172 traverse the membrane as a helical segment; the sequence is LFMRLSAIIPFYIFYLPPLIF. Residues 173–181 lie on the Cytoplasmic side of the membrane; that stretch reads YFTRSKKMS. The chain crosses the membrane as a helical span at residues 182–202; sequence PILYALALLYPSLLVIDNGHF. Residues 203–211 lie on the Lumenal side of the membrane; it reads QYNSISLGL. Residues 212-232 traverse the membrane as a helical segment; it reads FLATYMFLTKNFTIIGSILFV. Topologically, residues 233–239 are cytoplasmic; that stretch reads AALNYKQ. The helical transmembrane segment at 240-257 threads the bilayer; it reads MELYHALPVFVFILARSI. Over 258–268 the chain is Lumenal; the sequence is NKTQLFNSFRR. A helical transmembrane segment spans residues 269-289; the sequence is ILTIGLFVVGTFLIIWLPFLL. The Cytoplasmic portion of the chain corresponds to 290-332; the sequence is TGTAKDVIIRVFPFNRGLYEDKVASFWCAFSFILKRLPLQSVQ. The chain crosses the membrane as a helical span at residues 333–353; that stretch reads IYISTALVLAGSAPSLLVLFL. Residues 354–359 lie on the Lumenal side of the membrane; the sequence is RPTEKQ. Residues 360–379 form a helical membrane-spanning segment; it reads FRISLTATGLSFFLFSFHVH. Residues 380–382 lie on the Cytoplasmic side of the membrane; that stretch reads EKT. Residues 383-403 form a helical membrane-spanning segment; it reads ILLAAVPALLLISEYTSLVIW. Residues 404-420 are Lumenal-facing; that stretch reads FLNITNISIFSLCVKDN. Residues 421 to 441 traverse the membrane as a helical segment; sequence FALSLSFFFAYFVVSYAYTAP. Over 442–443 the chain is Cytoplasmic; it reads RK. A helical membrane pass occupies residues 444–464; that stretch reads ISHILTILIGFAICILELYGP. At 465 to 474 the chain is on the lumenal side; it reads SNQRFPHIYQ. The chain crosses the membrane as a helical span at residues 475–495; it reads LANAFFSCVHFIYFLLYLSFA. Residues 496–503 are Cytoplasmic-facing; that stretch reads SFEKTKKE.

This sequence belongs to the ALG6/ALG8 glucosyltransferase family.

It localises to the endoplasmic reticulum membrane. The enzyme catalyses an alpha-D-Man-(1-&gt;2)-alpha-D-Man-(1-&gt;2)-alpha-D-Man-(1-&gt;3)-[alpha-D-Man-(1-&gt;2)-alpha-D-Man-(1-&gt;3)-[alpha-D-Man-(1-&gt;2)-alpha-D-Man-(1-&gt;6)]-alpha-D-Man-(1-&gt;6)]-beta-D-Man-(1-&gt;4)-beta-D-GlcNAc-(1-&gt;4)-alpha-D-GlcNAc-diphospho-di-trans,poly-cis-dolichol + a di-trans,poly-cis-dolichyl beta-D-glucosyl phosphate = an alpha-D-Glc-(1-&gt;3)-alpha-D-Man-(1-&gt;2)-alpha-D-Man-(1-&gt;2)-alpha-D-Man-(1-&gt;3)-[alpha-D-Man-(1-&gt;2)-alpha-D-Man-(1-&gt;3)-[alpha-D-Man-(1-&gt;2)-alpha-D-Man-(1-&gt;6)]-alpha-D-Man-(1-&gt;6)]-beta-D-Man-(1-&gt;4)-beta-D-GlcNAc-(1-&gt;4)-alpha-D-GlcNAc-diphospho-di-trans,poly-cis-dolichol + a di-trans,poly-cis-dolichyl phosphate + H(+). It participates in protein modification; protein glycosylation. In terms of biological role, adds the first glucose residue to the lipid-linked oligosaccharide precursor for N-linked glycosylation. Transfers glucose from dolichyl phosphate glucose (Dol-P-Glc) onto the lipid-linked oligosaccharide Man(9)GlcNAc(2)-PP-Dol. In Caenorhabditis elegans, this protein is Probable dolichyl pyrophosphate Man9GlcNAc2 alpha-1,3-glucosyltransferase.